The sequence spans 382 residues: Anhydro-N-acetylmuramic acid kinase (382 aa).

9-16 lines the ATP pocket; sequence GTSLDGID.

This sequence belongs to the anhydro-N-acetylmuramic acid kinase family.

It catalyses the reaction 1,6-anhydro-N-acetyl-beta-muramate + ATP + H2O = N-acetyl-D-muramate 6-phosphate + ADP + H(+). It participates in amino-sugar metabolism; 1,6-anhydro-N-acetylmuramate degradation. Its pathway is cell wall biogenesis; peptidoglycan recycling. Catalyzes the specific phosphorylation of 1,6-anhydro-N-acetylmuramic acid (anhMurNAc) with the simultaneous cleavage of the 1,6-anhydro ring, generating MurNAc-6-P. Is required for the utilization of anhMurNAc either imported from the medium or derived from its own cell wall murein, and thus plays a role in cell wall recycling. This chain is Anhydro-N-acetylmuramic acid kinase, found in Bacillus cereus (strain Q1).